The chain runs to 156 residues: MQLVIAAVGHKMPAWIENGFGEYAKRMPPDCRIHLKEIKPVERSGSKTAETAMALERAKIEAAVPKGARIIALDEHGKDVTSVQLAQLLTQWQQDGRDVTFVIGGADGLDPDFKKKADMLIRISSLTLPHGMVRVMLAEQLYRAWSITQNHPYHRV.

S-adenosyl-L-methionine-binding positions include L73, G104, and 123–128 (ISSLTL).

This sequence belongs to the RNA methyltransferase RlmH family. As to quaternary structure, homodimer.

The protein localises to the cytoplasm. The catalysed reaction is pseudouridine(1915) in 23S rRNA + S-adenosyl-L-methionine = N(3)-methylpseudouridine(1915) in 23S rRNA + S-adenosyl-L-homocysteine + H(+). Its function is as follows. Specifically methylates the pseudouridine at position 1915 (m3Psi1915) in 23S rRNA. This chain is Ribosomal RNA large subunit methyltransferase H, found in Herminiimonas arsenicoxydans.